Consider the following 113-residue polypeptide: UPF0122 protein M6_Spy0905 (113 aa).

It belongs to the UPF0122 family.

Might take part in the signal recognition particle (SRP) pathway. This is inferred from the conservation of its genetic proximity to ftsY/ffh. May be a regulatory protein. The chain is UPF0122 protein M6_Spy0905 from Streptococcus pyogenes serotype M6 (strain ATCC BAA-946 / MGAS10394).